The primary structure comprises 792 residues: Glucocorticoid receptor (792 aa).

The span at 1–15 (MDSKESLAPPGRDEV) shows a compositional bias: basic and acidic residues. Positions 1–25 (MDSKESLAPPGRDEVPSSLLGRGRG) are disordered. The tract at residues 1-436 (MDSKESLAPP…STATGPPPKL (436 aa)) is modulating. Residue Arg24 is modified to Omega-N-methylarginine. The residue at position 46 (Ser46) is a Phosphoserine. The interval 67-98 (SKGSASNAQQQQQQQQQQQQQQQQQPQPDLSK) is disordered. Positions 75-94 (QQQQQQQQQQQQQQQQQPQP) are enriched in low complexity. A phosphoserine mark is found at Ser131, Ser152, and Ser159. A compositionally biased stretch (polar residues) spans 148–162 (NRSTSRPENPKSSTP). The tract at residues 148-201 (NRSTSRPENPKSSTPAAGCATPTEKEFPQTHSDPSSEQQNRKSQPGTNGGSVKL) is disordered. Thr168 is modified (phosphothreonine). Residues 176–193 (QTHSDPSSEQQNRKSQPG) are compositionally biased toward polar residues. Phosphoserine occurs at positions 221, 229, 243, and 284. Glycyl lysine isopeptide (Lys-Gly) (interchain with G-Cter in SUMO); alternate cross-links involve residues Lys294 and Lys310. Residues Lys294 and Lys310 each participate in a glycyl lysine isopeptide (Lys-Gly) (interchain with G-Cter in SUMO2); alternate cross-link. Residues Ser324 and Ser421 each carry the phosphoserine modification. Residues 434 to 509 (PKLCLVCSDE…AGMNLEARKT (76 aa)) constitute a DNA-binding region (nuclear receptor). Lys435 is covalently cross-linked (Glycyl lysine isopeptide (Lys-Gly) (interchain with G-Cter in ubiquitin)). 2 NR C4-type zinc fingers span residues 437 to 457 (CLVC…CGSC) and 473 to 497 (CAGR…YRKC). Lys496, Lys508, Lys510, and Lys511 each carry N6-acetyllysine. An interaction with CLOCK region spans residues 501 to 792 (GMNLEARKTK…NIKKLLFHQK (292 aa)). The segment at 503–538 (NLEARKTKKKIKGIQQATAGVSQDTSENANKTIVPA) is hinge. Residues 539 to 773 (ALPQLTPTLV…FPEMLAEIIT (235 aa)) enclose the NR LBD domain. The interaction with CRY1 stretch occupies residues 547-712 (LVSLLEVIEP…EIRMTYIKEL (166 aa)). A Glycyl lysine isopeptide (Lys-Gly) (interchain with G-Cter in SUMO) cross-link involves residue Lys718.

It belongs to the nuclear hormone receptor family. NR3 subfamily. In terms of assembly, heteromultimeric cytoplasmic complex with HSP90AA1, HSPA1A/HSPA1B, and FKBP5 or another immunophilin such as PPID, STIP1, or the immunophilin homolog PPP5C. Upon ligand binding FKBP5 dissociates from the complex and FKBP4 takes its place, thereby linking the complex to dynein and mediating transport to the nucleus, where the complex dissociates. Probably forms a complex composed of chaperones HSP90 and HSP70, co-chaperones CDC37, PPP5C, TSC1 and client protein TSC2, CDK4, AKT, RAF1 and NR3C1; this complex does not contain co-chaperones STIP1/HOP and PTGES3/p23. Directly interacts with UNC45A. Binds to DNA as a homodimer, and as heterodimer with NR3C2 or the retinoid X receptor. Binds STAT5A and STAT5B homodimers and heterodimers. Interacts with NRIP1, POU2F1, POU2F2 and TRIM28. Interacts with several coactivator complexes, including the SMARCA4 complex, CREBBP/EP300, TADA2L (Ada complex) and p160 coactivators such as NCOA2 and NCOA6. Interaction with BAG1 inhibits transactivation. Interacts with HEXIM1 and TGFB1I1. Interacts with NCOA1. Interacts with NCOA3, SMARCA4, SMARCC1, SMARCD1, and SMARCE1. Interacts with CLOCK, CRY1 and CRY2 in a ligand-dependent fashion. Interacts with CIART. Interacts with RWDD3. Interacts with UBE2I/UBC9 and this interaction is enhanced in the presence of RWDD3. Interacts with GRIP1. Interacts with NR4A3 (via nuclear receptor DNA-binding domain), represses transcription activity of NR4A3 on the POMC promoter Nur response element (NurRE). Directly interacts with PNRC2 to attract and form a complex with UPF1 and DCP1A; the interaction leads to rapid mRNA degradation. Interacts with GSK3B. Interacts with FNIP1 and FNIP2. Interacts (via C-terminus) with HNRNPU (via C-terminus). Interacts with MCM3AP. Interacts (via domain NR LBD) with HSP90AA1 and HSP90AB1. In the absence of hormonal ligand, interacts with TACC1. Interacts (via NR LBD domain) with ZNF764 (via KRAB domain); the interaction regulates transcription factor activity of NR3C1 by directing its actions toward certain biologic pathways. In terms of processing, acetylation by CLOCK reduces its binding to glucocorticoid response elements and its transcriptional activity. Post-translationally, increased proteasome-mediated degradation in response to glucocorticoids. Phosphorylated in the absence of hormone; becomes hyperphosphorylated in the presence of glucocorticoids. Phosphorylated in the absence of hormone; becomes hyperphosphorylated in the presence of glucocorticoid. The Ser-221, Ser-243 and Ser-421-phosphorylated forms are mainly cytoplasmic, and the Ser-229-phosphorylated form is nuclear. Phosphorylation at Ser-229 increases transcriptional activity. Phosphorylation at Ser-221, Ser-243 and Ser-421 decreases signaling capacity. Phosphorylation at Ser-421 may protect from glucocorticoid-induced apoptosis. Phosphorylation at Ser-221 and Ser-229 is not required in regulation of chromosome segregation. May be dephosphorylated by PPP5C, attenuates NR3C1 action. In terms of processing, sumoylation at Lys-294 and Lys-310 negatively regulates its transcriptional activity. Sumoylation at Lys-718 positively regulates its transcriptional activity in the presence of RWDD3. Sumoylation at Lys-294 and Lys-310 is dispensable whereas sumoylation at Lys-718 is critical for the stimulatory effect of RWDD3 on its transcriptional activity. Heat shock increases sumoylation in a RWDD3-dependent manner. Post-translationally, ubiquitinated. Ubiquitination by UBR5 leads to its degradation: UBR5 specifically recognizes and binds ligand-bound NR3C1 when it is not associated with coactivators (NCOAs). In presence of NCOAs, the UBR5-degron is not accessible, preventing its ubiquitination and degradation. Expressed in spleen, kidney and liver. Expressed in a circadian manner in the liver. In terms of tissue distribution, expressed at highest level in spleen with lesser amounts in kidney and liver.

Its subcellular location is the cytoplasm. The protein localises to the nucleus. The protein resides in the mitochondrion. It localises to the cytoskeleton. It is found in the spindle. Its subcellular location is the microtubule organizing center. The protein localises to the centrosome. The protein resides in the chromosome. It localises to the nucleoplasm. Functionally, receptor for glucocorticoids (GC). Has a dual mode of action: as a transcription factor that binds to glucocorticoid response elements (GRE), both for nuclear and mitochondrial DNA, and as a modulator of other transcription factors. Affects inflammatory responses, cellular proliferation and differentiation in target tissues. Involved in chromatin remodeling. Plays a role in rapid mRNA degradation by binding to the 5' UTR of target mRNAs and interacting with PNRC2 in a ligand-dependent manner which recruits the RNA helicase UPF1 and the mRNA-decapping enzyme DCP1A, leading to RNA decay. Could act as a coactivator for STAT5-dependent transcription upon growth hormone (GH) stimulation and could reveal an essential role of hepatic GR in the control of body growth. In terms of biological role, has transcriptional activation and repression activity. Mediates glucocorticoid-induced apoptosis. Promotes accurate chromosome segregation during mitosis. May act as a tumor suppressor. May play a negative role in adipogenesis through the regulation of lipolytic and antilipogenic gene expression. Its function is as follows. Acts as a dominant negative inhibitor of isoform 1. Has intrinsic transcriptional activity independent of isoform Alpha when both isoforms are coexpressed. Loses this transcription modulator function on its own. Has no hormone-binding activity. May play a role in controlling glucose metabolism by maintaining insulin sensitivity. Reduces hepatic gluconeogenesis through down-regulation of PEPCK in an isoform Alpha-dependent manner. Directly regulates STAT1 expression in isoform Alpha-independent manner. This is Glucocorticoid receptor (Nr3c1) from Mus musculus (Mouse).